A 320-amino-acid polypeptide reads, in one-letter code: Formimidoylglutamase (320 aa).

The Mn(2+) site is built by His-125, Asp-153, His-155, Asp-157, Asp-244, and Asp-246.

This sequence belongs to the arginase family. Mn(2+) serves as cofactor.

It catalyses the reaction N-formimidoyl-L-glutamate + H2O = formamide + L-glutamate. Its pathway is amino-acid degradation; L-histidine degradation into L-glutamate; L-glutamate from N-formimidoyl-L-glutamate (hydrolase route): step 1/1. Catalyzes the conversion of N-formimidoyl-L-glutamate to L-glutamate and formamide. This Rhodococcus opacus (strain B4) protein is Formimidoylglutamase.